A 392-amino-acid chain; its full sequence is Ribonuclease D (392 aa).

Residues 12–178 (LIETTEALAA…PVYEGLRARL (167 aa)) enclose the 3'-5' exonuclease domain. An HRDC domain is found at 217-298 (NRRQLALVKA…ASTKAIPDAE (82 aa)).

This sequence belongs to the RNase D family. A divalent metal cation serves as cofactor.

It is found in the cytoplasm. The catalysed reaction is Exonucleolytic cleavage that removes extra residues from the 3'-terminus of tRNA to produce 5'-mononucleotides.. Exonuclease involved in the 3' processing of various precursor tRNAs. Initiates hydrolysis at the 3'-terminus of an RNA molecule and releases 5'-mononucleotides. The protein is Ribonuclease D of Acidiphilium cryptum (strain JF-5).